The sequence spans 510 residues: ATP synthase subunit alpha (510 aa).

169-176 lines the ATP pocket; the sequence is GDRQTGKT.

Belongs to the ATPase alpha/beta chains family. As to quaternary structure, F-type ATPases have 2 components, CF(1) - the catalytic core - and CF(0) - the membrane proton channel. CF(1) has five subunits: alpha(3), beta(3), gamma(1), delta(1), epsilon(1). CF(0) has three main subunits: a(1), b(2) and c(9-12). The alpha and beta chains form an alternating ring which encloses part of the gamma chain. CF(1) is attached to CF(0) by a central stalk formed by the gamma and epsilon chains, while a peripheral stalk is formed by the delta and b chains.

Its subcellular location is the cell inner membrane. The enzyme catalyses ATP + H2O + 4 H(+)(in) = ADP + phosphate + 5 H(+)(out). Produces ATP from ADP in the presence of a proton gradient across the membrane. The alpha chain is a regulatory subunit. This is ATP synthase subunit alpha from Nitrobacter hamburgensis (strain DSM 10229 / NCIMB 13809 / X14).